Reading from the N-terminus, the 187-residue chain is Pre-mRNA-splicing factor cwf7 (187 aa).

Belongs to the SPF27 family. Belongs to the 40S cdc5-associated complex (or cwf complex), a spliceosome sub-complex reminiscent of a late-stage spliceosome composed of the U2, U5 and U6 snRNAs and at least brr2, cdc5, cwf2/prp3, cwf3/syf1, cwf4/syf3, cwf5/ecm2, spp42/cwf6, cwf7/spf27, cwf8, cwf9, cwf10, cwf11, cwf12, prp45/cwf13, cwf14, cwf15, cwf16, cwf17, cwf18, cwf19, cwf20, cwf21, cwf22, cwf23, cwf24, cwf25, cwf26, cyp7/cwf27, cwf28, cwf29/ist3, lea1, msl1, prp5/cwf1, prp10, prp12/sap130, prp17, prp22, sap61, sap62, sap114, sap145, slu7, smb1, smd1, smd3, smf1, smg1 and syf2.

The protein localises to the nucleus. Involved in mRNA splicing. In Schizosaccharomyces pombe (strain 972 / ATCC 24843) (Fission yeast), this protein is Pre-mRNA-splicing factor cwf7 (cwf7).